The following is a 424-amino-acid chain: tRNA(Met) cytidine acetate ligase (424 aa).

Residues 7–20 (ITEYNPFHNGHLHH), Gly-102, Asn-174, and Arg-199 contribute to the ATP site.

It belongs to the TmcAL family.

It localises to the cytoplasm. The catalysed reaction is cytidine(34) in elongator tRNA(Met) + acetate + ATP = N(4)-acetylcytidine(34) in elongator tRNA(Met) + AMP + diphosphate. Catalyzes the formation of N(4)-acetylcytidine (ac(4)C) at the wobble position of elongator tRNA(Met), using acetate and ATP as substrates. First activates an acetate ion to form acetyladenylate (Ac-AMP) and then transfers the acetyl group to tRNA to form ac(4)C34. This is tRNA(Met) cytidine acetate ligase from Alkaliphilus metalliredigens (strain QYMF).